Here is a 238-residue protein sequence, read N- to C-terminus: MTEPTNTLPNLGAAELAAYIDHTLLRPDAGAAEIAAWCDEAVTHGFKSVCVNPIQIPLVAAKLAGTGVGVCSVIGFPFGASPTAVKVAEAAWVVAHGATEVDMVIDIGALKDGRAEAVRDDIAAVKAACGKALLKVIIEACLLDDEQKALACRLSAEAGADFVKTSTGFAGGGATAKDVALMRRTVGSALGVKASGGVRTRDDALRMIAAGASRIGASASIAIVAEADAASTGAKGGY.

Catalysis depends on Asp102, which acts as the Proton donor/acceptor. Lys164 functions as the Schiff-base intermediate with acetaldehyde in the catalytic mechanism. Residue Lys193 is the Proton donor/acceptor of the active site.

It belongs to the DeoC/FbaB aldolase family. DeoC type 1 subfamily.

It localises to the cytoplasm. It carries out the reaction 2-deoxy-D-ribose 5-phosphate = D-glyceraldehyde 3-phosphate + acetaldehyde. Its pathway is carbohydrate degradation; 2-deoxy-D-ribose 1-phosphate degradation; D-glyceraldehyde 3-phosphate and acetaldehyde from 2-deoxy-alpha-D-ribose 1-phosphate: step 2/2. Catalyzes a reversible aldol reaction between acetaldehyde and D-glyceraldehyde 3-phosphate to generate 2-deoxy-D-ribose 5-phosphate. This chain is Deoxyribose-phosphate aldolase, found in Rhodospirillum rubrum (strain ATCC 11170 / ATH 1.1.1 / DSM 467 / LMG 4362 / NCIMB 8255 / S1).